A 239-amino-acid polypeptide reads, in one-letter code: Prolyl hydroxylase EGLN3 (239 aa).

A beta(2)beta(3) 'finger-like' loop region spans residues 62 to 73 (AGPRAGVSKRHL). The segment at 88–104 (CEAINFLLSLIDRLVLY) is required for interaction with ADRB2. In terms of domain architecture, Fe2OG dioxygenase spans 116–214 (ERSKAMVACY…RYAMTVWYFD (99 aa)). Fe cation is bound by residues histidine 135, aspartate 137, and histidine 196. Arginine 205 provides a ligand contact to 2-oxoglutarate.

In terms of assembly, interacts with ADRB2; the interaction hydroxylates ADRB2 facilitating its ubiquitination by the VHL-E3 ligase complex. Interacts with PKM; the interaction hydroxylates PKM in hypoxia. Interacts with WDR83; the interaction leads to almost complete elimination of HIF-mediated reporter activity. Interacts with BCL2 (via its BH4 domain); the interaction disrupts the BAX-BCL4 complex inhibiting the anti-apoptotic activity of BCL2. Interacts with LIMD1, WTIP and AJUBA. Fe(2+) is required as a cofactor. It depends on L-ascorbate as a cofactor. In terms of processing, ubiquitinated by SIAH1 and/or SIAH2 in response to the unfolded protein response (UPR), leading to its degradation. In terms of tissue distribution, highly expressed in cardiac and smooth muscle. Also high expression in brain, skeletal muscle and kidney. Low levels in lung.

Its subcellular location is the nucleus. It localises to the cytoplasm. It catalyses the reaction L-prolyl-[protein] + 2-oxoglutarate + O2 = trans-4-hydroxy-L-prolyl-[protein] + succinate + CO2. It carries out the reaction L-prolyl-[hypoxia-inducible factor alpha subunit] + 2-oxoglutarate + O2 = trans-4-hydroxy-L-prolyl-[hypoxia-inducible factor alpha subunit] + succinate + CO2. Its function is as follows. Prolyl hydroxylase that mediates hydroxylation of proline residues in target proteins, such as PKM, TELO2, ATF4 and HIF1A. Target proteins are preferentially recognized via a LXXLAP motif. Cellular oxygen sensor that catalyzes, under normoxic conditions, the post-translational formation of 4-hydroxyproline in hypoxia-inducible factor (HIF) alpha proteins. Hydroxylates a specific proline found in each of the oxygen-dependent degradation (ODD) domains (N-terminal, NODD, and C-terminal, CODD) of HIF1A. Also hydroxylates HIF2A. Has a preference for the CODD site for both HIF1A and HIF2A. Hydroxylation on the NODD site by EGLN3 appears to require prior hydroxylation on the CODD site. Hydroxylated HIFs are then targeted for proteasomal degradation via the von Hippel-Lindau ubiquitination complex. Under hypoxic conditions, the hydroxylation reaction is attenuated allowing HIFs to escape degradation resulting in their translocation to the nucleus, heterodimerization with HIF1B, and increased expression of hypoxy-inducible genes. ELGN3 is the most important isozyme in limiting physiological activation of HIFs (particularly HIF2A) in hypoxia. Also hydroxylates PKM in hypoxia, limiting glycolysis. Under normoxia, hydroxylates and regulates the stability of ADRB2. Regulator of cardiomyocyte and neuronal apoptosis. In cardiomyocytes, inhibits the anti-apoptotic effect of BCL2 by disrupting the BAX-BCL2 complex. In neurons, has a NGF-induced proapoptotic effect, probably through regulating CASP3 activity. Also essential for hypoxic regulation of neutrophilic inflammation. Plays a crucial role in DNA damage response (DDR) by hydroxylating TELO2, promoting its interaction with ATR which is required for activation of the ATR/CHK1/p53 pathway. Also mediates hydroxylation of ATF4, leading to decreased protein stability of ATF4. In Mus musculus (Mouse), this protein is Prolyl hydroxylase EGLN3.